Here is a 214-residue protein sequence, read N- to C-terminus: Chalcone isomerase-like protein 1 (214 aa).

This sequence belongs to the chalcone isomerase family. Mostly expressed in glandular trichomes (lupulin glands), and, to a lower extent, in cones, cones bracts, leaves, stems and roots.

The protein resides in the cytoplasm. The catalysed reaction is a chalcone = a flavanone.. The protein operates within secondary metabolite biosynthesis; flavonoid biosynthesis. In terms of biological role, involved in the biosynthesis of prenylated phenolics natural products which contribute to the bitter taste of beer and display broad biological activities. Involved in anthocyanin biosynthesis. Polyketide binding proteins (PBP) which reduces the catalytic activities of CHS_H1 and PT1L and prevents demethylxanthohumol (DMX) production, by binding to DMX and naringenin chalcone (NC) to stabilize the chalconoids ring-opened structure. This is Chalcone isomerase-like protein 1 from Humulus lupulus (European hop).